Here is a 193-residue protein sequence, read N- to C-terminus: Potassium-transporting ATPase KdpC subunit (193 aa).

The chain crosses the membrane as a helical span at residues 9-29; it reads VLMTVVTTVLLGLVYPLLITG.

This sequence belongs to the KdpC family. As to quaternary structure, the system is composed of three essential subunits: KdpA, KdpB and KdpC.

It is found in the cell inner membrane. Functionally, part of the high-affinity ATP-driven potassium transport (or Kdp) system, which catalyzes the hydrolysis of ATP coupled with the electrogenic transport of potassium into the cytoplasm. This subunit acts as a catalytic chaperone that increases the ATP-binding affinity of the ATP-hydrolyzing subunit KdpB by the formation of a transient KdpB/KdpC/ATP ternary complex. In Koribacter versatilis (strain Ellin345), this protein is Potassium-transporting ATPase KdpC subunit.